Reading from the N-terminus, the 956-residue chain is Zinc finger CCHC domain-containing protein 14 (956 aa).

Disordered regions lie at residues 25-50 (SSLN…PSGA), 78-99 (ALHT…GKHG), 206-229 (SSSS…KVGA), 243-276 (GIPS…GTGS), 361-464 (KEKS…EKEK), 485-505 (PVQN…PQLM), 543-583 (LEER…QGLS), and 750-786 (FYSG…PQPA). Residues 29–43 (SGGGGGGGGGGGGKS) are compositionally biased toward gly residues. Low complexity-rich tracts occupy residues 206–225 (SSSS…PSLP) and 246–265 (SSQS…SASL). The span at 369 to 389 (LNSSAPSLVTSSGVARVTPTS) shows a compositional bias: polar residues. The span at 423 to 432 (SSEYSSSSSS) shows a compositional bias: low complexity. A compositionally biased stretch (basic and acidic residues) spans 438–464 (VREESSDSAEESDRRVDIHVEGTEKEK). Positions 750 to 768 (FYSGGAGSSSPGNIPASSQ) are enriched in low complexity. A CCHC-type zinc finger spans residues 913 to 930 (LSCYNCGATGHRAQDCKQ).

The protein is Zinc finger CCHC domain-containing protein 14 (Zcchc14) of Mus musculus (Mouse).